The primary structure comprises 317 residues: Ferrochelatase (317 aa).

Fe cation-binding residues include His-192 and Glu-271.

This sequence belongs to the ferrochelatase family.

It localises to the cytoplasm. The enzyme catalyses heme b + 2 H(+) = protoporphyrin IX + Fe(2+). Its pathway is porphyrin-containing compound metabolism; protoheme biosynthesis; protoheme from protoporphyrin-IX: step 1/1. Its function is as follows. Catalyzes the ferrous insertion into protoporphyrin IX. This is Ferrochelatase from Geobacter metallireducens (strain ATCC 53774 / DSM 7210 / GS-15).